Reading from the N-terminus, the 362-residue chain is Homeobox protein Nkx-2.3 (362 aa).

Disordered regions lie at residues 126–149 (EAAG…RKPR) and 203–222 (QRQD…PPRR). Basic and acidic residues predominate over residues 132-141 (KTSEDGERPK). Residues 145–204 (RRKPRVLFSQAQVFELERRFKQQRYLSAPEREHLASSLKLTSTQVKIWFQNRRYKCKRQR) constitute a DNA-binding region (homeobox).

This sequence belongs to the NK-2 homeobox family. As to expression, expressed in spleen and intestine. Also expressed in salivary gland and tongue.

Its subcellular location is the nucleus. Transcriptional regulator essential for normal development and functions of the small intestine and spleen. Activates directly MADCAM1 expression. Required for homing of lymphocytes in spleen and mucosa-associated lymphoid tissue. May have a role during pharyngeal organogenesis. This is Homeobox protein Nkx-2.3 (Nkx2-3) from Mus musculus (Mouse).